Here is a 501-residue protein sequence, read N- to C-terminus: MRDTKKMLNRADELDDLYEAVRALIIPHVRAADEACSLKSAGQLHTDDTQRLQNVLVEPYPPKALQERFQFTLPDNEGNGKDGLMHLIRDVLRYSVNTWDQGFMDKLTSSTNPVGVISEIVLGILNTNVHVYHVAPALSVIEKVTGRTLAAYFGFNSPSAGGISCQGGSASNLTSLVVARNSLYPDCKLNGGSSYQFAIFTSCHGHFSMEKAAITCGMGLSSVVHVPVNDDGRMNVSALRELVIQAKAQGKTPLYVNATAGTTVLGVFDPLHEIKTICEEFGMWFHVDASWGGSIIFSAKHRHKLTGCELADSLTISPHKMLNVPMTCSFLLTNNLSSFYTANSLDAGYLFHDTEDDEVWDLANLTLQCGRRADSLKMALAWTYYGAAGFERRINHAFKMAAHLSSIIQKSPDFELVSPNPPPCLQVCFYYTPGGKMAKSEMETSRRTRAMVEKMVDRGFMFDFAPGPKGDFFRVVVNCETLLGTVEGLFKGLEAVGKQVV.

Lys-106 to Thr-108 serves as a coordination point for substrate. Lys-320 carries the N6-(pyridoxal phosphate)lysine modification. Arg-474 contacts substrate.

Belongs to the group II decarboxylase family. Pyridoxal 5'-phosphate serves as cofactor.

It carries out the reaction L-aspartate + H(+) = beta-alanine + CO2. It functions in the pathway secondary metabolite biosynthesis. Functionally, L-aspartate decarboxylase; part of the gene cluster that mediates the biosynthesis of destruxins, insecticidal cyclic hexadepsipeptides which induce flaccid paralysis and visceral muscle contraction in insects through targeting the calcium channels and vacuolar-type ATPases. The aldo-keto reductase dtxS3 converts alpha-ketoisocaproic acid from deaminated leucine into alpha-hydroxyisocaproic acid (HIC), which is the first substrate for destruxin assembly by dtxS1. L-aspartate decarboxylase dtxS4 converts aspartic acid into beta-alanine, the last substrate for the destruxin assembly line performed by dtxS1. The nonribosomal peptide synthetase dtxS1 synthesizes destruxins B and B2, whereas the cytochrome P450 monooxygenase dtxS2 is required to convert destruxin B into other destruxin derivatives, including destructins C, D, A and E. Destruxin E-diol (ED) is further produced in a non-enzymatic manner from destruxin E. Destruxins play an important role in virulence and escape from insect host immune defenses. In Metarhizium robertsii (strain ARSEF 23 / ATCC MYA-3075) (Metarhizium anisopliae (strain ARSEF 23)), this protein is L-aspartate decarboxylase dtxS4.